The chain runs to 434 residues: Oxysterol-binding protein homolog 4 (434 aa).

Residues 7 to 29 (SSSWTSFLKSIASFNGDLSSLSA) are ALPS motif. The interval 16-366 (SIASFNGDLS…WQRRWFKDFD (351 aa)) is OSBP-related domain (ORD). 24–29 (LSSLSA) is an a 1,2-diacyl-sn-glycero-3-phospho-(1D-myo-inositol 4-phosphate) binding site. Residue Q96 participates in 20-hydroxycholesterol binding. Q96 provides a ligand contact to 25-hydroxycholesterol. 7beta-hydroxycholesterol contacts are provided by Q96 and R100. Q96 provides a ligand contact to cholesterol. Q96 serves as a coordination point for ergosterol. A 1,2-diacyl-sn-glycero-3-phospho-(1D-myo-inositol 4-phosphate) is bound by residues 109-112 (KPLN), 143-144 (HH), K336, E340, and R344. T370 is subject to Phosphothreonine. S389 bears the Phosphoserine mark.

Belongs to the OSBP family.

Its subcellular location is the cytoplasm. The protein resides in the golgi apparatus membrane. Lipid transport protein (LTP) involved in non-vesicular transfer of lipids between membranes. Functions in phosphoinositide-coupled directional transport of various lipids by carrying the lipid molecule in a hydrophobic pocket and transferring it between membranes through the cytosol. Involved in maintenance of intracellular sterol distribution and homeostasis. Involved in lipid countertransport between the Golgi complex and membranes of the endoplasmic reticulum. Specifically exchanges sterol with phosphatidylinositol 4-phosphate (PI4P), delivering sterol to the Golgi in exchange for PI4P, which is delivered to the ER-localized PI4P phosphatase SAC1 for degradation. Thus, by maintaining a PI4P gradient at the ER/Golgi interface, SAC1 may drive PS transport. Displays a similar affinity for PI4P and sterols. Binds sterol and PI4P in a mutually exclusive manner. Involved in ergosterol transport from the plasma membrane (PM) to the ER. Mediates sterol transport from the ER to mitochondria. Involved in the negative regulation of Golgi-derived transport vesicle biogenesis. Plays a role in the positive regulation of vesicular transport of ceramide from the ER to the Golgi, negatively regulating COPII-mediated ER export of cargos. In Saccharomyces cerevisiae (strain ATCC 204508 / S288c) (Baker's yeast), this protein is Oxysterol-binding protein homolog 4.